Consider the following 162-residue polypeptide: Succinate dehydrogenase assembly factor 2-A, mitochondrial (162 aa).

This sequence belongs to the SDHAF2 family. As to quaternary structure, interacts with the flavoprotein subunit within the SDH catalytic dimer.

The protein localises to the mitochondrion matrix. In terms of biological role, plays an essential role in the assembly of succinate dehydrogenase (SDH), an enzyme complex (also referred to as respiratory complex II) that is a component of both the tricarboxylic acid (TCA) cycle and the mitochondrial electron transport chain, and which couples the oxidation of succinate to fumarate with the reduction of ubiquinone (coenzyme Q) to ubiquinol. Required for flavinylation (covalent attachment of FAD) of the flavoprotein subunit of the SDH catalytic dimer. This chain is Succinate dehydrogenase assembly factor 2-A, mitochondrial, found in Drosophila yakuba (Fruit fly).